Reading from the N-terminus, the 160-residue chain is Non-secretory ribonuclease (160 aa).

A signal peptide spans Met1–Ala27. The C-linked (Man) tryptophan glycan is linked to Trp34. Residue His42 is the Proton acceptor of the active site. N-linked (GlcNAc...) asparagine glycosylation is present at Asn44. 4 disulfide bridges follow: Cys50–Cys110, Cys64–Cys122, Cys82–Cys137, and Cys89–Cys98. Position 60 is a 3'-nitrotyrosine (Tyr60). Lys65 to Thr69 serves as a coordination point for substrate. Asn92, Asn111, and Asn138 each carry an N-linked (GlcNAc...) asparagine glycan. His155 (proton donor) is an active-site residue.

This sequence belongs to the pancreatic ribonuclease family. In terms of assembly, interacts with and forms a tight 1:1 complex with RNH1. Dimerization of two such complexes may occur.

It is found in the lysosome. Its subcellular location is the cytoplasmic granule. The catalysed reaction is an [RNA] containing cytidine + H2O = an [RNA]-3'-cytidine-3'-phosphate + a 5'-hydroxy-ribonucleotide-3'-[RNA].. It catalyses the reaction an [RNA] containing uridine + H2O = an [RNA]-3'-uridine-3'-phosphate + a 5'-hydroxy-ribonucleotide-3'-[RNA].. Functionally, this is a non-secretory ribonuclease. It is a pyrimidine specific nuclease with a slight preference for U. Cytotoxin and helminthotoxin. Possesses a wide variety of biological activities. This chain is Non-secretory ribonuclease (RNASE2), found in Papio hamadryas (Hamadryas baboon).